Here is a 188-residue protein sequence, read N- to C-terminus: MATYTTSDFKPGLKFMQDGEPCVIVENEFVKPGKGQAFTRTRIRKLISGKVLDVNFKSGTSVEAADVMDLNLTYSYKDDAFWYFMHPETFEQYSADAKAIGDAEKWLLDQADCIVTLWNGAPISVTPPNFVELEIIDTDPGLKGDTAGTGGKPATLSTGAVVKVPLFVQIGEVIKVDTRSGEYVSRVK.

K34 is modified (N6-(3,6-diaminohexanoyl)-5-hydroxylysine).

The protein belongs to the elongation factor P family. In terms of processing, may be beta-lysylated on the epsilon-amino group of Lys-34 by the combined action of EpmA and EpmB, and then hydroxylated on the C5 position of the same residue by EpmC (if this protein is present). Lysylation is critical for the stimulatory effect of EF-P on peptide-bond formation. The lysylation moiety may extend toward the peptidyltransferase center and stabilize the terminal 3-CCA end of the tRNA. Hydroxylation of the C5 position on Lys-34 may allow additional potential stabilizing hydrogen-bond interactions with the P-tRNA.

The protein resides in the cytoplasm. It participates in protein biosynthesis; polypeptide chain elongation. In terms of biological role, involved in peptide bond synthesis. Alleviates ribosome stalling that occurs when 3 or more consecutive Pro residues or the sequence PPG is present in a protein, possibly by augmenting the peptidyl transferase activity of the ribosome. Modification of Lys-34 is required for alleviation. The polypeptide is Elongation factor P (Pasteurella multocida (strain Pm70)).